The chain runs to 479 residues: Gamma-aminobutyric acid receptor subunit rho-1 (479 aa).

The first 21 residues, 1–21 (MLAVPNMRFGIFLLWWGWVLA), serve as a signal peptide directing secretion. Residues 22-280 (TESRMHWPGR…LYINFTLRRH (259 aa)) are Extracellular-facing. Positions 32–55 (EVHEMSKKGRPQRQRREVHEDAHK) are disordered. A compositionally biased stretch (basic and acidic residues) spans 45 to 55 (QRREVHEDAHK). Arginine 125 contacts 4-aminobutanoate. N-linked (GlcNAc...) asparagine glycosylation occurs at asparagine 140. Serine 189 lines the 4-aminobutanoate pocket. A disulfide bridge connects residues cysteine 198 and cysteine 212. Glutamate 217 contacts 4-aminobutanoate. Residues asparagine 234 and asparagine 274 are each glycosylated (N-linked (GlcNAc...) asparagine). A helical transmembrane segment spans residues 281 to 301 (IFFFLLQTYFPATLMVMLSWV). Topologically, residues 302–313 (SFWIDRRAVPAR) are cytoplasmic. The chain crosses the membrane as a helical span at residues 314 to 334 (VPLGITTVLTMSTIITGVNAS). Over 335-345 (MPRVSYIKAVD) the chain is Extracellular. A helical membrane pass occupies residues 346 to 366 (IYLWVSFVFVFLSVLEYAAVN). Over 367–457 (YLTTVQERKE…MRIDTHAIDK (91 aa)) the chain is Cytoplasmic. A helical membrane pass occupies residues 458-478 (YSRIIFPAAYILFNLIYWSIF). Position 479 (serine 479) is a topological domain, extracellular.

This sequence belongs to the ligand-gated ion channel (TC 1.A.9) family. Gamma-aminobutyric acid receptor (TC 1.A.9.5) subfamily. GABRR1 sub-subfamily. As to quaternary structure, three rho subunits (rho-1/GBRR1, rho-2/GBRR2 and rho-3/GBRR3) coassemble either to form functional homopentamers or heteropentamers. Rho-1/GBRR1 subunits can also associate with alpha-1/GBRA1 subunits to form a functional GABAAR. Interacts with SQSTM1. Highly expressed in the retina. Expressed in a lesser extent in brain, lung and thymus.

The protein resides in the postsynaptic cell membrane. It is found in the cell membrane. The enzyme catalyses chloride(in) = chloride(out). Inhibited by TPMPA, a rho-specific antagonist, when forming a homopentamer. In contrast with other GABAARs, rho-1 GABAAR is not inhibited by bicuculline, when forming a homopentamer. Rho subunit of the pentameric ligand-gated chloride channels responsible for mediating the effects of gamma-aminobutyric acid (GABA), the major inhibitory neurotransmitter in the brain. Rho-containing GABA-gated chloride channels are a subclass of GABA(A) receptors (GABAARs) entirely composed of rho subunits, where GABA molecules bind at the rho intersubunit interfaces. When activated by GABA, rho-GABAARs selectively allow the flow of chloride anions across the cell membrane down their electrochemical gradient. Rho-1 subunits are primarily expressed in retina where rho-1-containing GABAARs may play a role in retinal neurotransmission. Rho-1 GABAARs are also involved in neuronal tonic (extrasynaptic) and phasic (synaptic) transmission in the Purkinje neurons of the cerebellum. Rho-1 GABAARs may also contribute to the regulation of glial development in the cerebellum by controlling extrasynaptic transmission. The polypeptide is Gamma-aminobutyric acid receptor subunit rho-1 (Homo sapiens (Human)).